We begin with the raw amino-acid sequence, 362 residues long: MPGSAAARPLRAVKIWLGAIAALIAAMVLVGGATRLTESGLSIVEWKPITGTLPPLTDAQWAQAFEGYKTIPQYRELNAGMSLSEFKTIFWWEWSHRLLGRVIGLAYLLPFLWFIWRGHLGGELKRRLWLIFGLGALQGAVGWWMVASGLSQRVEVAQERLAIHLTLALVIFAAIVWTLRRLDERPVGAVPLRLRITAAALLALTFVQIFFGALVAGLRAGKLYNTWPTIDGALIPSAERLWFQEPWWRNLFDNHLTVQFDHRMLAYALWALAIAHAIDAVRARAGAAARGAVWFAAALTLQAALGIFTLLYEVPIGLALAHQAVAVLVLMLGVLQLERLWPRASASAANLPKSAMAAASRN.

5 consecutive transmembrane segments (helical) span residues 12–32 (AVKIWLGAIAALIAAMVLVGG), 102–122 (VIGLAYLLPFLWFIWRGHLGG), 128–148 (LWLIFGLGALQGAVGWWMVAS), 159–179 (ERLAIHLTLALVIFAAIVWTL), and 198–218 (AAALLALTFVQIFFGALVAGL). H262 is a binding site for heme. 3 helical membrane passes run 264–286 (MLAYALWALAIAHAIDAVRARAG), 291–311 (GAVWFAAALTLQAALGIFTLL), and 314–334 (VPIGLALAHQAVAVLVLMLGV). H322 lines the heme pocket.

This sequence belongs to the COX15/CtaA family. Type 2 subfamily. In terms of assembly, interacts with CtaB. Heme b serves as cofactor.

The protein localises to the cell membrane. It carries out the reaction Fe(II)-heme o + 2 A + H2O = Fe(II)-heme a + 2 AH2. It participates in porphyrin-containing compound metabolism; heme A biosynthesis; heme A from heme O: step 1/1. Its function is as follows. Catalyzes the conversion of heme O to heme A by two successive hydroxylations of the methyl group at C8. The first hydroxylation forms heme I, the second hydroxylation results in an unstable dihydroxymethyl group, which spontaneously dehydrates, resulting in the formyl group of heme A. The polypeptide is Heme A synthase (Rhodopseudomonas palustris (strain BisA53)).